The chain runs to 736 residues: Probable potassium transport system protein Kup 2 (736 aa).

12 helical membrane-spanning segments follow: residues 1–21 (MAIV…LYTA), 42–62 (MLSL…VLIA), 84–104 (GAWL…DSVL), 126–146 (LFDE…VILF), 156–176 (IGKV…IVGV), 204–224 (AAGI…EALY), 239–259 (WPFI…WMLA), 287–307 (AVIL…TGAF), 334–354 (LYIP…LAIF), 364–384 (YGLA…VYLW), 390–410 (VGAI…FIAS), and 414–434 (FLHG…VMYT). 2 disordered regions span residues 649–678 (TDTA…DTTS) and 693–736 (AEAR…KQKR). Composition is skewed to low complexity over residues 660–677 (PTRA…MDTT) and 700–709 (EAAAADAPAE). Residues 710-721 (QGDKGDKGKAEN) show a composition bias toward basic and acidic residues.

This sequence belongs to the HAK/KUP transporter (TC 2.A.72) family.

The protein localises to the cell membrane. The enzyme catalyses K(+)(in) + H(+)(in) = K(+)(out) + H(+)(out). Functionally, transport of potassium into the cell. Likely operates as a K(+):H(+) symporter. This chain is Probable potassium transport system protein Kup 2, found in Bifidobacterium longum (strain NCC 2705).